A 124-amino-acid chain; its full sequence is Small ribosomal subunit protein uS12 (124 aa).

Asp89 carries the post-translational modification 3-methylthioaspartic acid. Residues 104-124 (TAGVKDRRQSRSKYGAKAPKE) are disordered.

Belongs to the universal ribosomal protein uS12 family. Part of the 30S ribosomal subunit. Contacts proteins S8 and S17. May interact with IF1 in the 30S initiation complex.

In terms of biological role, with S4 and S5 plays an important role in translational accuracy. Its function is as follows. Interacts with and stabilizes bases of the 16S rRNA that are involved in tRNA selection in the A site and with the mRNA backbone. Located at the interface of the 30S and 50S subunits, it traverses the body of the 30S subunit contacting proteins on the other side and probably holding the rRNA structure together. The combined cluster of proteins S8, S12 and S17 appears to hold together the shoulder and platform of the 30S subunit. The chain is Small ribosomal subunit protein uS12 from Synechococcus sp. (strain CC9605).